Consider the following 696-residue polypeptide: Polyribonucleotide nucleotidyltransferase (696 aa).

2 residues coordinate Mg(2+): D483 and D489. Residues 550–609 (PRITTIYVKTDKIRDVIGSGGKNIRGITEATGVTIDIDDTGKINIASTDKAACDMAIKMI) form the KH domain. An S1 motif domain is found at 619 to 687 (GKLYMGLVKK…KQGKIKLSRK (69 aa)).

Belongs to the polyribonucleotide nucleotidyltransferase family. The cofactor is Mg(2+).

It is found in the cytoplasm. It catalyses the reaction RNA(n+1) + phosphate = RNA(n) + a ribonucleoside 5'-diphosphate. Involved in mRNA degradation. Catalyzes the phosphorolysis of single-stranded polyribonucleotides processively in the 3'- to 5'-direction. The protein is Polyribonucleotide nucleotidyltransferase of Geotalea daltonii (strain DSM 22248 / JCM 15807 / FRC-32) (Geobacter daltonii).